An 842-amino-acid polypeptide reads, in one-letter code: Glucans biosynthesis glucosyltransferase H (842 aa).

Helical transmembrane passes span 140–160, 194–214, 513–533, 568–588, 615–635, 656–676, and 680–700; these read ILLL…KTIL, ILIL…TALM, VFLT…FLAL, IALF…SIIL, VLLA…AFLG, FMRH…MAWL, and FLFW…VSAI.

Belongs to the glycosyltransferase 2 family. OpgH subfamily.

Its subcellular location is the cell inner membrane. Its pathway is glycan metabolism; osmoregulated periplasmic glucan (OPG) biosynthesis. In terms of biological role, involved in the biosynthesis of osmoregulated periplasmic glucans (OPGs). This is Glucans biosynthesis glucosyltransferase H from Klebsiella pneumoniae subsp. pneumoniae (strain ATCC 700721 / MGH 78578).